Here is a 349-residue protein sequence, read N- to C-terminus: Insulin gene enhancer protein ISL-1 (349 aa).

LIM zinc-binding domains are found at residues 17–70 and 79–133; these read CVGC…CKRD and CAKC…RADH. The homeobox DNA-binding region spans 181 to 240; the sequence is TTRVRTVLNEKQLHTLRTCYAANPRPDALMKEQLVEMTGLSPRVIRVWFQNKRCKDKKRS. The LIM-binding domain (LID) stretch occupies residues 262–291; it reads GTPMVAASPERHDGGLQANPVEVQSYQPPW. The segment at 312–349 is disordered; sequence VNFSEGGPGSNSTGSEVASMSSQLPDTPNSMVASPIEA. Polar residues predominate over residues 321–343; the sequence is SNSTGSEVASMSSQLPDTPNSMV.

In terms of assembly, at neuronal promoters, displaces LDB1 from LHX3 LIM domain to form a ternary complex in which ISL1 contacts both LHX3 and LDB1; allosteric structural changes in the DNA binding domain of LHX3, induced by the ISL1:LHX3 interaction, may explain differences in sequence specificity of the different complexes. Interacts with LHX3. Interacts (via C-terminus) with POU4F2 (via C-terminus) isoform 1. Interacts with POU3F2. Interacts with POU4F3. Interacts (via N-terminal domain) with MLIP; the interaction represses ISL1 transactivator activity. Interacts with GCN5/KAT2A. Interactions of ISL1 with MLIP1 or KAT2A may be mutually exclusive. Ubiquitinated probably by WWP1 E3 ubiquitin ligase; ubiquitination is followed by protein degradation. Post-translationally, phosphorylated. As to expression, expressed in subsets of neurons of the adrenal medulla and dorsal root ganglion, inner nuclear and ganglion cell layers in the retina, the pineal and some regions of the brain.

The protein localises to the nucleus. Its function is as follows. DNA-binding transcriptional activator. Recognizes and binds to the consensus octamer binding site 5'-ATAATTAA-3' in promoter of target genes. Plays a fundamental role in the gene regulatory network essential for retinal ganglion cell (RGC) differentiation. Cooperates with the transcription factor POU4F2 to achieve maximal levels of expression of RGC target genes and RGC fate specification in the developing retina. Involved in the specification of motor neurons in cooperation with LHX3 and LDB1. Binds to insulin gene enhancer sequences. Essential for heart development. Marker of one progenitor cell population that give rise to the outflow tract, right ventricle, a subset of left ventricular cells, and a large number of atrial cells as well, its function is required for these progenitors to contribute to the heart. Controls the expression of FGF and BMP growth factors in this cell population and is required for proliferation and survival of cells within pharyngeal foregut endoderm and adjacent splanchnic mesoderm as well as for migration of cardiac progenitors into the heart. This is Insulin gene enhancer protein ISL-1 (ISL1) from Homo sapiens (Human).